Consider the following 304-residue polypeptide: tRNA (guanine(9)-N1)-methyltransferase (304 aa).

Basic and acidic residues-rich tracts occupy residues 1–26 (MENK…KNET) and 42–72 (RQQE…KRKI). A disordered region spans residues 1 to 72 (MENKDALDIG…LRKEERKRKI (72 aa)). Residues 81–276 (QKKRIRLGKV…EVIPKRKGIL (196 aa)) enclose the SAM-dependent MTase TRM10-type domain. Residues Leu183, Gly203, 207–211 (DKNRY), Cys215, Leu229, and 241–243 (KIL) each bind S-adenosyl-L-methionine. The active-site Proton acceptor is Asp207. The segment at 282–304 (SFDVSEDTRSQSNQSDSELEKEN) is disordered. A Phosphoserine modification is found at Ser296.

Belongs to the class IV-like SAM-binding methyltransferase superfamily. TRM10 family. Monomer.

The protein resides in the cytoplasm. Its subcellular location is the nucleus. It catalyses the reaction guanosine(9) in tRNA + S-adenosyl-L-methionine = N(1)-methylguanosine(9) in tRNA + S-adenosyl-L-homocysteine + H(+). Its function is as follows. S-adenosyl-L-methionine-dependent guanine N(1)-methyltransferase that catalyzes the formation of N(1)-methylguanine at position 9 (m1G9) in cytoplasmic tRNA. This is tRNA (guanine(9)-N1)-methyltransferase from Schizosaccharomyces pombe (strain 972 / ATCC 24843) (Fission yeast).